Here is a 396-residue protein sequence, read N- to C-terminus: Cell adhesion molecule 3 (396 aa).

The N-terminal stretch at 1–22 is a signal peptide; the sequence is MGAPSALPLLLLLACSWAPGGA. Residues 23–124 enclose the Ig-like V-type domain; the sequence is NLSQDDSQPW…VRTAKSLVTV (102 aa). Topologically, residues 23 to 328 are extracellular; it reads NLSQDDSQPW…PVPSSSSTYH (306 aa). 3 disulfide bridges follow: cysteine 48–cysteine 108, cysteine 150–cysteine 207, and cysteine 252–cysteine 297. 2 Ig-like C2-type domains span residues 128 to 226 and 231 to 313; these read PQKP…QRIE and PTAM…FTLN. An N-linked (GlcNAc...) asparagine glycan is attached at asparagine 288. The helical transmembrane segment at 329–349 threads the bilayer; it reads AIIGGIVAFIVFLLLILLIFL. Residues 350–396 are Cytoplasmic-facing; the sequence is GHYLIRHKGTYLTHEAKGSDDAPDADTAIINAEGGQSGGDDKKEYFI. Residues 365–396 are disordered; it reads AKGSDDAPDADTAIINAEGGQSGGDDKKEYFI. Serine 386 is subject to Phosphoserine.

Belongs to the nectin family. In terms of assembly, homodimer. Can form trans-heterodimers with NECTIN3. Interacts with EPB41L1, DLG3, PALS2 and CASK.

It is found in the cell membrane. Its subcellular location is the cell junction. Functionally, involved in cell-cell adhesion. Has both calcium-independent homophilic cell-cell adhesion activity and calcium-independent heterophilic cell-cell adhesion activity with IGSF4, NECTIN1 and NECTIN3. Interaction with EPB41L1 may regulate structure or function of cell-cell junctions. This is Cell adhesion molecule 3 (Cadm3) from Rattus norvegicus (Rat).